The primary structure comprises 136 residues: Nucleoside diphosphate kinase (136 aa).

ATP-binding residues include K10, F58, R86, T92, R104, and N114. Catalysis depends on H117, which acts as the Pros-phosphohistidine intermediate.

It belongs to the NDK family. Homotetramer. The cofactor is Mg(2+).

It is found in the cytoplasm. It carries out the reaction a 2'-deoxyribonucleoside 5'-diphosphate + ATP = a 2'-deoxyribonucleoside 5'-triphosphate + ADP. It catalyses the reaction a ribonucleoside 5'-diphosphate + ATP = a ribonucleoside 5'-triphosphate + ADP. In terms of biological role, major role in the synthesis of nucleoside triphosphates other than ATP. The ATP gamma phosphate is transferred to the NDP beta phosphate via a ping-pong mechanism, using a phosphorylated active-site intermediate. The protein is Nucleoside diphosphate kinase of Mycobacterium avium (strain 104).